A 185-amino-acid chain; its full sequence is A-type ATP synthase subunit E (185 aa).

The protein belongs to the V-ATPase E subunit family. Has multiple subunits with at least A(3), B(3), C, D, E, F, H, I and proteolipid K(x).

It is found in the cell membrane. Its function is as follows. Component of the A-type ATP synthase that produces ATP from ADP in the presence of a proton gradient across the membrane. In Thermoplasma acidophilum (strain ATCC 25905 / DSM 1728 / JCM 9062 / NBRC 15155 / AMRC-C165), this protein is A-type ATP synthase subunit E.